The chain runs to 300 residues: Diaminopimelate epimerase (300 aa).

Substrate contacts are provided by asparagine 15, glutamine 47, and asparagine 67. Residue cysteine 76 is the Proton donor of the active site. Substrate contacts are provided by residues 77 to 78, asparagine 163, asparagine 197, and 215 to 216; these read GN and ER. Catalysis depends on cysteine 224, which acts as the Proton acceptor. A substrate-binding site is contributed by 225–226; that stretch reads GS. The tract at residues 275-300 is disordered; the sequence is SGTFDPATGEWSRDAQNDKPTDRGAA. The span at 285 to 300 shows a compositional bias: basic and acidic residues; sequence WSRDAQNDKPTDRGAA.

It belongs to the diaminopimelate epimerase family. As to quaternary structure, homodimer.

The protein localises to the cytoplasm. It catalyses the reaction (2S,6S)-2,6-diaminopimelate = meso-2,6-diaminopimelate. The protein operates within amino-acid biosynthesis; L-lysine biosynthesis via DAP pathway; DL-2,6-diaminopimelate from LL-2,6-diaminopimelate: step 1/1. Functionally, catalyzes the stereoinversion of LL-2,6-diaminopimelate (L,L-DAP) to meso-diaminopimelate (meso-DAP), a precursor of L-lysine and an essential component of the bacterial peptidoglycan. The polypeptide is Diaminopimelate epimerase (Brucella anthropi (strain ATCC 49188 / DSM 6882 / CCUG 24695 / JCM 21032 / LMG 3331 / NBRC 15819 / NCTC 12168 / Alc 37) (Ochrobactrum anthropi)).